A 555-amino-acid chain; its full sequence is MTHLSDLDIANQSTLQPIKDIAASVGISEDALEPYGHYKAKIDINKITPRDSKGKVVLVTAMSPTPAGEGKSTVTVGLADAFHELKKNVMVALREPALGPTFGIKGGATGGGYAQVLPMEDINLHFNGDFHAITTANNALSAFIDNHIHQGNELGIDQRRIEWKRVLDMNDRALRHVNVGLGGPTNGVPREDGFNITVASEIMAILCLSRSIKDLKDKISRITIGYTRDRKPVTVADLKVQGALAMILKDAIKPNLVQSIEGTPALVHGGPFANIAHGCNSILATETARDLADIVVTEAGFGSDLGAEKFMDIKAREAGFDPAAVVVVATIRALKMHGGVAKDNLKEENVEAVKAGIVNLERHVNNIKKFGVEPVVAINAFIHDTDAEVEYVKSWAKENNVRIALTEVWEKGGKGGVDLANEVLEVIDQPNSFKPLYELELPLEQKIEKIVTEIYGGSKVTFSSKAQKQLKQFKENGWDNYPVCMAKTQYSFSDDQTLLGAPSGFEITIRELEAKTGAGFIVALTGAIMTMPGLPKKPAALNMDVTDDGHAIGLF.

65–72 (TPAGEGKS) is a binding site for ATP.

This sequence belongs to the formate--tetrahydrofolate ligase family.

The enzyme catalyses (6S)-5,6,7,8-tetrahydrofolate + formate + ATP = (6R)-10-formyltetrahydrofolate + ADP + phosphate. It functions in the pathway one-carbon metabolism; tetrahydrofolate interconversion. This chain is Formate--tetrahydrofolate ligase, found in Staphylococcus aureus (strain bovine RF122 / ET3-1).